We begin with the raw amino-acid sequence, 196 residues long: Large ribosomal subunit protein uL10 (196 aa).

The tract at residues 163–196 (GAPAAAEAPAAEEAPAAEAAETEAPAEAAATEEN) is disordered. A compositionally biased stretch (low complexity) spans 164 to 196 (APAAAEAPAAEEAPAAEAAETEAPAEAAATEEN).

Belongs to the universal ribosomal protein uL10 family. In terms of assembly, part of the ribosomal stalk of the 50S ribosomal subunit. The N-terminus interacts with L11 and the large rRNA to form the base of the stalk. The C-terminus forms an elongated spine to which L12 dimers bind in a sequential fashion forming a multimeric L10(L12)X complex.

Forms part of the ribosomal stalk, playing a central role in the interaction of the ribosome with GTP-bound translation factors. The sequence is that of Large ribosomal subunit protein uL10 from Arthrobacter sp. (strain FB24).